The primary structure comprises 424 residues: Enolase (424 aa).

Residue Gln-165 participates in (2R)-2-phosphoglycerate binding. Glu-207 (proton donor) is an active-site residue. Asp-244, Glu-283, and Asp-310 together coordinate Mg(2+). Residues Lys-335, Arg-364, Ser-365, and Lys-386 each contribute to the (2R)-2-phosphoglycerate site. The active-site Proton acceptor is the Lys-335.

The protein belongs to the enolase family. Mg(2+) is required as a cofactor.

It is found in the cytoplasm. It localises to the secreted. The protein resides in the cell surface. The enzyme catalyses (2R)-2-phosphoglycerate = phosphoenolpyruvate + H2O. Its pathway is carbohydrate degradation; glycolysis; pyruvate from D-glyceraldehyde 3-phosphate: step 4/5. Its function is as follows. Catalyzes the reversible conversion of 2-phosphoglycerate (2-PG) into phosphoenolpyruvate (PEP). It is essential for the degradation of carbohydrates via glycolysis. The chain is Enolase from Chlamydia caviae (strain ATCC VR-813 / DSM 19441 / 03DC25 / GPIC) (Chlamydophila caviae).